Reading from the N-terminus, the 362-residue chain is N5-carboxyaminoimidazole ribonucleotide synthase (362 aa).

Residues R85, K125, 130-136 (GYDGRGQ), 158-161 (EKFI), E166, and 244-245 (NE) each bind ATP. Positions 89–274 (KSLLDELNLS…QFELHLRALL (186 aa)) constitute an ATP-grasp domain.

The protein belongs to the PurK/PurT family. In terms of assembly, homodimer.

It carries out the reaction 5-amino-1-(5-phospho-beta-D-ribosyl)imidazole + hydrogencarbonate + ATP = 5-carboxyamino-1-(5-phospho-D-ribosyl)imidazole + ADP + phosphate + 2 H(+). Its pathway is purine metabolism; IMP biosynthesis via de novo pathway; 5-amino-1-(5-phospho-D-ribosyl)imidazole-4-carboxylate from 5-amino-1-(5-phospho-D-ribosyl)imidazole (N5-CAIR route): step 1/2. Functionally, catalyzes the ATP-dependent conversion of 5-aminoimidazole ribonucleotide (AIR) and HCO(3)(-) to N5-carboxyaminoimidazole ribonucleotide (N5-CAIR). This Haemophilus influenzae (strain ATCC 51907 / DSM 11121 / KW20 / Rd) protein is N5-carboxyaminoimidazole ribonucleotide synthase.